Here is a 200-residue protein sequence, read N- to C-terminus: Fibrillarin-like rRNA/tRNA 2'-O-methyltransferase (200 aa).

S-adenosyl-L-methionine contacts are provided by residues 62 to 63 (TT), 78 to 79 (EF), 103 to 104 (DA), and 123 to 126 (DVAQ).

This sequence belongs to the methyltransferase superfamily. Fibrillarin family. In terms of assembly, interacts with nop5. Component of box C/D small ribonucleoprotein (sRNP) particles that contain rpl7ae, FlpA and nop5, plus a guide RNA.

Functionally, involved in pre-rRNA and tRNA processing. Utilizes the methyl donor S-adenosyl-L-methionine to catalyze the site-specific 2'-hydroxyl methylation of ribose moieties in rRNA and tRNA. Site specificity is provided by a guide RNA that base pairs with the substrate. Methylation occurs at a characteristic distance from the sequence involved in base pairing with the guide RNA. This Methanoculleus marisnigri (strain ATCC 35101 / DSM 1498 / JR1) protein is Fibrillarin-like rRNA/tRNA 2'-O-methyltransferase.